Consider the following 163-residue polypeptide: S-fimbrial adhesin protein SfaS (163 aa).

The signal sequence occupies residues 1–22 (MKLKAIILATGLINCIAFSAQA). Cys-38 and Cys-75 are disulfide-bonded. The involved in sialic acid binding stretch occupies residues 138 to 144 (KARAVSK).

It belongs to the fimbrial protein family.

Its subcellular location is the fimbrium. Its function is as follows. Fimbriae (also called pili), polar filaments radiating from the surface of the bacterium to a length of 0.5-1.5 micrometers and numbering 100-300 per cell, enable bacteria to colonize the epithelium of specific host organs. Functionally, a minor fimbrial subunit, this protein is necessary for full expression of S-specific binding. S-fimbrial adhesins enable pathogenic E.coli causing urinary-tract infections or newborn meningitis to attach to glycoproteins terminating with alpha-sialic acid-(2-3)-beta-Gal. This protein binds to the alpha-sialic acid-(2-3)-beta-Gal and is thus responsible for erythrocyte recognition and hemagglutination. The polypeptide is S-fimbrial adhesin protein SfaS (sfaS) (Escherichia coli O6:K15:H31 (strain 536 / UPEC)).